Here is a 306-residue protein sequence, read N- to C-terminus: Secretory carrier-associated membrane protein 1 (306 aa).

The segment at Met1–Ala66 is disordered. Residues Met1–Gln141 are Cytoplasmic-facing. Residues Lys25–Ala36 are compositionally biased toward gly residues. Over residues Pro40–Ser55 the composition is skewed to low complexity. Positions Leu72 to Ala109 form a coiled coil. The next 4 membrane-spanning stretches (helical) occupy residues Tyr142 to Val162, Ile174 to Tyr194, Phe209 to Ala229, and Ile257 to Ile277. At Gln278–Phe306 the chain is on the cytoplasmic side.

Belongs to the SCAMP family.

Its subcellular location is the cell membrane. The protein resides in the cytoplasmic vesicle. The protein localises to the secretory vesicle membrane. Its function is as follows. Probably involved in membrane trafficking. The chain is Secretory carrier-associated membrane protein 1 (SCAMP1) from Oryza sativa subsp. japonica (Rice).